A 100-amino-acid polypeptide reads, in one-letter code: MIPLQHGLILAAILFVLGLTGLIIRRNLLFMLISLEVMINAAALAFVVAGSYWGQADGQVMYILAITLAAAEASIGLALLLQLYRRRHTLNIDTVSEMRG.

3 helical membrane passes run 4–24, 28–48, and 60–80; these read LQHG…GLII, LLFM…AFVV, and VMYI…LALL.

The protein belongs to the complex I subunit 4L family. In terms of assembly, NDH-1 is composed of 13 different subunits. Subunits NuoA, H, J, K, L, M, N constitute the membrane sector of the complex.

It localises to the cell inner membrane. It carries out the reaction a quinone + NADH + 5 H(+)(in) = a quinol + NAD(+) + 4 H(+)(out). NDH-1 shuttles electrons from NADH, via FMN and iron-sulfur (Fe-S) centers, to quinones in the respiratory chain. The immediate electron acceptor for the enzyme in this species is believed to be ubiquinone. Couples the redox reaction to proton translocation (for every two electrons transferred, four hydrogen ions are translocated across the cytoplasmic membrane), and thus conserves the redox energy in a proton gradient. The chain is NADH-quinone oxidoreductase subunit K from Yersinia enterocolitica serotype O:8 / biotype 1B (strain NCTC 13174 / 8081).